Consider the following 145-residue polypeptide: Aminoglycoside N(6')-acetyltransferase type 1 (145 aa).

Residues 1 to 145 (MDIRQMNRTH…ERVIFYRKRC (145 aa)) form the N-acetyltransferase domain. Positions 22, 25, 66, and 79 each coordinate substrate. Residues 81-83 (IFV) and 89-94 (QRGVAK) each bind acetyl-CoA. Asp115 lines the substrate pocket. Asn120 is a binding site for acetyl-CoA. Glu136 is a substrate binding site.

Homodimer.

The enzyme catalyses kanamycin B + acetyl-CoA = N(6')-acetylkanamycin B + CoA + H(+). Functionally, catalyzes the transfer of an acetyl group from acetyl-CoA to the 6'-amino group of aminoglycoside molecules conferring resistance to antibiotics containing the purpurosamine ring. This chain is Aminoglycoside N(6')-acetyltransferase type 1, found in Salmonella typhimurium (strain LT2 / SGSC1412 / ATCC 700720).